A 341-amino-acid polypeptide reads, in one-letter code: UDP-3-O-acylglucosamine N-acyltransferase (341 aa).

H242 serves as the catalytic Proton acceptor.

The protein belongs to the transferase hexapeptide repeat family. LpxD subfamily. Homotrimer.

The catalysed reaction is a UDP-3-O-[(3R)-3-hydroxyacyl]-alpha-D-glucosamine + a (3R)-hydroxyacyl-[ACP] = a UDP-2-N,3-O-bis[(3R)-3-hydroxyacyl]-alpha-D-glucosamine + holo-[ACP] + H(+). Its pathway is bacterial outer membrane biogenesis; LPS lipid A biosynthesis. Functionally, catalyzes the N-acylation of UDP-3-O-acylglucosamine using 3-hydroxyacyl-ACP as the acyl donor. Is involved in the biosynthesis of lipid A, a phosphorylated glycolipid that anchors the lipopolysaccharide to the outer membrane of the cell. The protein is UDP-3-O-acylglucosamine N-acyltransferase of Haemophilus influenzae (strain ATCC 51907 / DSM 11121 / KW20 / Rd).